Consider the following 150-residue polypeptide: Large ribosomal subunit protein bL9 (150 aa).

The protein belongs to the bacterial ribosomal protein bL9 family.

Binds to the 23S rRNA. The protein is Large ribosomal subunit protein bL9 of Cupriavidus metallidurans (strain ATCC 43123 / DSM 2839 / NBRC 102507 / CH34) (Ralstonia metallidurans).